Consider the following 225-residue polypeptide: Cytochrome c oxidase subunit 2 (225 aa).

At 1–26 (MMTWSQMSFSDMNSPIMEQMVFFHDH) the chain is on the mitochondrial intermembrane side. The chain crosses the membrane as a helical span at residues 27-48 (SMMIILMITILTIYMITNIMMN). Over 49 to 62 (NLLSRSMMEGQEIE) the chain is Mitochondrial matrix. Residues 63-82 (IIWTIIPAITLIFIAIPSLH) traverse the membrane as a helical segment. Topologically, residues 83-225 (LLYLTDETFN…KNFINFINSS (143 aa)) are mitochondrial intermembrane. Cu cation contacts are provided by H160, C195, E197, C199, H203, and M206. Residue E197 participates in Mg(2+) binding.

Belongs to the cytochrome c oxidase subunit 2 family. As to quaternary structure, component of the cytochrome c oxidase (complex IV, CIV), a multisubunit enzyme composed of a catalytic core of 3 subunits and several supernumerary subunits. The complex exists as a monomer or a dimer and forms supercomplexes (SCs) in the inner mitochondrial membrane with ubiquinol-cytochrome c oxidoreductase (cytochrome b-c1 complex, complex III, CIII). Requires Cu cation as cofactor.

Its subcellular location is the mitochondrion inner membrane. It carries out the reaction 4 Fe(II)-[cytochrome c] + O2 + 8 H(+)(in) = 4 Fe(III)-[cytochrome c] + 2 H2O + 4 H(+)(out). In terms of biological role, component of the cytochrome c oxidase, the last enzyme in the mitochondrial electron transport chain which drives oxidative phosphorylation. The respiratory chain contains 3 multisubunit complexes succinate dehydrogenase (complex II, CII), ubiquinol-cytochrome c oxidoreductase (cytochrome b-c1 complex, complex III, CIII) and cytochrome c oxidase (complex IV, CIV), that cooperate to transfer electrons derived from NADH and succinate to molecular oxygen, creating an electrochemical gradient over the inner membrane that drives transmembrane transport and the ATP synthase. Cytochrome c oxidase is the component of the respiratory chain that catalyzes the reduction of oxygen to water. Electrons originating from reduced cytochrome c in the intermembrane space (IMS) are transferred via the dinuclear copper A center (CU(A)) of subunit 2 and heme A of subunit 1 to the active site in subunit 1, a binuclear center (BNC) formed by heme A3 and copper B (CU(B)). The BNC reduces molecular oxygen to 2 water molecules using 4 electrons from cytochrome c in the IMS and 4 protons from the mitochondrial matrix. The polypeptide is Cytochrome c oxidase subunit 2 (COII) (Rhipicephalus sanguineus (Brown dog tick)).